A 73-amino-acid chain; its full sequence is MAKKEDTIVLEGRVKELLPGMHFKILLENGMPVTAHLCGKMRMSNIRLLVGDRVTVEMSAYDLTKARVVYRHR.

Positions 1 to 73 (MAKKEDTIVL…TKARVVYRHR (73 aa)) constitute an S1-like domain.

It belongs to the IF-1 family. As to quaternary structure, component of the 30S ribosomal translation pre-initiation complex which assembles on the 30S ribosome in the order IF-2 and IF-3, IF-1 and N-formylmethionyl-tRNA(fMet); mRNA recruitment can occur at any time during PIC assembly.

The protein localises to the cytoplasm. One of the essential components for the initiation of protein synthesis. Stabilizes the binding of IF-2 and IF-3 on the 30S subunit to which N-formylmethionyl-tRNA(fMet) subsequently binds. Helps modulate mRNA selection, yielding the 30S pre-initiation complex (PIC). Upon addition of the 50S ribosomal subunit IF-1, IF-2 and IF-3 are released leaving the mature 70S translation initiation complex. This Chlamydia abortus (strain DSM 27085 / S26/3) (Chlamydophila abortus) protein is Translation initiation factor IF-1.